Consider the following 344-residue polypeptide: Dihydroorotate dehydrogenase (quinone) (344 aa).

Residues A65 to K69 and T89 each bind FMN. K69 lines the substrate pocket. N114 to F118 lines the substrate pocket. FMN is bound by residues N145 and N178. Residue N178 coordinates substrate. Residue S181 is the Nucleophile of the active site. Residue N183 coordinates substrate. The FMN site is built by K223 and T251. N252 to T253 lines the substrate pocket. FMN is bound by residues G274, G303, and Y324–S325.

The protein belongs to the dihydroorotate dehydrogenase family. Type 2 subfamily. Monomer. FMN serves as cofactor.

It is found in the cell membrane. The enzyme catalyses (S)-dihydroorotate + a quinone = orotate + a quinol. It functions in the pathway pyrimidine metabolism; UMP biosynthesis via de novo pathway; orotate from (S)-dihydroorotate (quinone route): step 1/1. Its function is as follows. Catalyzes the conversion of dihydroorotate to orotate with quinone as electron acceptor. In Cupriavidus pinatubonensis (strain JMP 134 / LMG 1197) (Cupriavidus necator (strain JMP 134)), this protein is Dihydroorotate dehydrogenase (quinone).